The primary structure comprises 363 residues: Aminomethyltransferase (363 aa).

The protein belongs to the GcvT family. As to quaternary structure, the glycine cleavage system is composed of four proteins: P, T, L and H.

It catalyses the reaction N(6)-[(R)-S(8)-aminomethyldihydrolipoyl]-L-lysyl-[protein] + (6S)-5,6,7,8-tetrahydrofolate = N(6)-[(R)-dihydrolipoyl]-L-lysyl-[protein] + (6R)-5,10-methylene-5,6,7,8-tetrahydrofolate + NH4(+). Its function is as follows. The glycine cleavage system catalyzes the degradation of glycine. This chain is Aminomethyltransferase, found in Thioalkalivibrio sulfidiphilus (strain HL-EbGR7).